Here is a 493-residue protein sequence, read N- to C-terminus: Glutamate--tRNA ligase (493 aa).

The 'HIGH' region signature appears at 10 to 20; that stretch reads PSPTGDPHVGT. 4 residues coordinate Zn(2+): Cys107, Cys109, Cys134, and His136. The 'KMSKS' region motif lies at 251 to 255; sequence KLSKR. Lys254 is a binding site for ATP.

This sequence belongs to the class-I aminoacyl-tRNA synthetase family. Glutamate--tRNA ligase type 1 subfamily. In terms of assembly, monomer. Zn(2+) is required as a cofactor.

It is found in the cytoplasm. The enzyme catalyses tRNA(Glu) + L-glutamate + ATP = L-glutamyl-tRNA(Glu) + AMP + diphosphate. In terms of biological role, catalyzes the attachment of glutamate to tRNA(Glu) in a two-step reaction: glutamate is first activated by ATP to form Glu-AMP and then transferred to the acceptor end of tRNA(Glu). This is Glutamate--tRNA ligase from Stutzerimonas stutzeri (strain A1501) (Pseudomonas stutzeri).